Reading from the N-terminus, the 238-residue chain is MIYAGILAGGIGSRMGNVPLPKQFLDIDNKPILIHTIEKFILVSEFNEIIIATPAQWISHTQDILKKYNITDQRVKVVAGGTDRNETIMNIIDHIRNVNGINNNDVIVTHDAVRPFLTQRIIKENIEVAAKYGAVDTVIEAIDTIVMSKDKQNIHSIPVRNEMYQGQTPQSFNIKLLQDSYRALSSEQKEILSDACKIIVESGHAVKLVRGELYNIKVTTPYDLKVANAIIQGDIADD.

Residues 7 to 10 (LAGG) and 81 to 87 (GTDRNET) contribute to the CTP site.

The protein belongs to the IspD/TarI cytidylyltransferase family. TarI subfamily.

It catalyses the reaction D-ribitol 5-phosphate + CTP + H(+) = CDP-L-ribitol + diphosphate. It functions in the pathway cell wall biogenesis; poly(ribitol phosphate) teichoic acid biosynthesis. Functionally, catalyzes the transfer of the cytidylyl group of CTP to D-ribitol 5-phosphate. This chain is Ribitol-5-phosphate cytidylyltransferase 2, found in Staphylococcus aureus (strain bovine RF122 / ET3-1).